A 158-amino-acid chain; its full sequence is Large ribosomal subunit protein uL22 (158 aa).

The protein belongs to the universal ribosomal protein uL22 family. Part of the 50S ribosomal subunit.

This protein binds specifically to 23S rRNA. It makes multiple contacts with different domains of the 23S rRNA in the assembled 50S subunit and ribosome. In terms of biological role, the globular domain of the protein is located near the polypeptide exit tunnel on the outside of the subunit, while an extended beta-hairpin is found that lines the wall of the exit tunnel in the center of the 70S ribosome. In Haloquadratum walsbyi (strain DSM 16790 / HBSQ001), this protein is Large ribosomal subunit protein uL22.